We begin with the raw amino-acid sequence, 243 residues long: Dirigent protein 16 (243 aa).

Residues 1-24 (MMIKQSPFLLLTTILFTVAVFVAA) form the signal peptide.

Belongs to the plant dirigent protein family. In terms of assembly, homodimer.

The protein localises to the secreted. Its subcellular location is the extracellular space. It is found in the apoplast. In terms of biological role, dirigent proteins impart stereoselectivity on the phenoxy radical-coupling reaction, yielding optically active lignans from two molecules of coniferyl alcohol in the biosynthesis of lignans, flavonolignans, and alkaloids and thus plays a central role in plant secondary metabolism. This Arabidopsis thaliana (Mouse-ear cress) protein is Dirigent protein 16 (DIR16).